Reading from the N-terminus, the 394-residue chain is Ornithine aminotransferase 1 (394 aa).

The residue at position 252 (K252) is an N6-(pyridoxal phosphate)lysine.

The protein belongs to the class-III pyridoxal-phosphate-dependent aminotransferase family. OAT subfamily. Pyridoxal 5'-phosphate is required as a cofactor.

Its subcellular location is the cytoplasm. The catalysed reaction is a 2-oxocarboxylate + L-ornithine = L-glutamate 5-semialdehyde + an L-alpha-amino acid. The protein operates within amino-acid biosynthesis; L-proline biosynthesis; L-glutamate 5-semialdehyde from L-ornithine: step 1/1. Catalyzes the interconversion of ornithine to glutamate semialdehyde. The sequence is that of Ornithine aminotransferase 1 from Staphylococcus aureus (strain COL).